We begin with the raw amino-acid sequence, 141 residues long: Large-conductance mechanosensitive channel (141 aa).

3 helical membrane passes run 17 to 37 (MDLA…ASIV), 40 to 60 (LIMP…LFIA), and 86 to 106 (GNFV…FIIV).

This sequence belongs to the MscL family. In terms of assembly, homopentamer.

The protein resides in the cell inner membrane. In terms of biological role, channel that opens in response to stretch forces in the membrane lipid bilayer. May participate in the regulation of osmotic pressure changes within the cell. The protein is Large-conductance mechanosensitive channel of Thiobacillus denitrificans (strain ATCC 25259 / T1).